An 86-amino-acid chain; its full sequence is Small ribosomal subunit protein uS17 (86 aa).

It belongs to the universal ribosomal protein uS17 family. In terms of assembly, part of the 30S ribosomal subunit.

Functionally, one of the primary rRNA binding proteins, it binds specifically to the 5'-end of 16S ribosomal RNA. This Streptococcus equi subsp. equi (strain 4047) protein is Small ribosomal subunit protein uS17.